The primary structure comprises 452 residues: MSRLFGTDGVRGLANGLLTAELAMQLAQAAAVVLGHERSTNGARPRAVVARDPRASGEFISAAVSAGLSSSGIDVYDAGVLPTPAAAYLVADLHADFGVMISASHNPAPDNGIKFFAKGGQKLPDEVEDAIEAQMAKDPVRPTGSDVGRIQTFSDAEDRYIVHLLGTLPHRLDGLKVVLDCAHGAASGCSPQLFNDAGAEIVVIGAEPDGLNINDGVGSTHLGALQRAVVEHGADLGIAHDGDADRCLAIDHEGNEVDGDQIMAILALALKESGKLKDNVLVATVMSNLGLKIALRNAGISIRETAVGDRYVLEEMRDGGYNLGGEQSGHVIFADHATTGDGLLTGLQLAAQVALTGKSLKELATVMTKLPQLMINVKKVDKARAGTDEGVLAAVAEASAELGETGRVLLRPSGTEALVRVMVEAADMPTAERICKHLAAVVEERLAVAPAV.

S104 acts as the Phosphoserine intermediate in catalysis. 4 residues coordinate Mg(2+): S104, D241, D243, and D245. S104 is modified (phosphoserine).

The protein belongs to the phosphohexose mutase family. Mg(2+) is required as a cofactor. Post-translationally, activated by phosphorylation.

It carries out the reaction alpha-D-glucosamine 1-phosphate = D-glucosamine 6-phosphate. Its function is as follows. Catalyzes the conversion of glucosamine-6-phosphate to glucosamine-1-phosphate. The polypeptide is Phosphoglucosamine mutase (Arthrobacter sp. (strain FB24)).